The following is a 786-amino-acid chain: Wall-associated receptor kinase-like 17 (786 aa).

The N-terminal stretch at 1–30 (MSYKNTNNSHLILFKLLLLLILYSADLTAS) is a signal peptide. The Extracellular segment spans residues 31-369 (SSCRSECGGC…YRCVGDKTKA (339 aa)). Residues N69, N122, N160, N165, and N274 are each glycosylated (N-linked (GlcNAc...) asparagine). The tract at residues 301 to 362 (CICDYTMSII…CVNFEGGYRC (62 aa)) is atypical EGF-like. 3 cysteine pairs are disulfide-bonded: C303–C318, C340–C353, and C347–C362. The helical transmembrane segment at 370–390 (IMIGAGTGFGVLVLVGGVWWL) threads the bilayer. The Cytoplasmic segment spans residues 391–786 (RKFLVKRRMA…VEPLNPLLTW (396 aa)). T433 carries the post-translational modification Phosphothreonine. The 276-residue stretch at 444 to 719 (FSENRVLGHG…REVFTELERI (276 aa)) folds into the Protein kinase domain. ATP is bound by residues 450–458 (LGHGGQGTV) and K472. A Phosphotyrosine modification is found at Y517. D570 acts as the Proton acceptor in catalysis. A phosphothreonine mark is found at T604 and T609. Phosphotyrosine is present on Y617. A compositionally biased stretch (low complexity) spans 766-775 (SSIVASPPSS). A disordered region spans residues 766-786 (SSIVASPPSSDVEPLNPLLTW).

It belongs to the protein kinase superfamily. Ser/Thr protein kinase family.

It is found in the membrane. It catalyses the reaction L-seryl-[protein] + ATP = O-phospho-L-seryl-[protein] + ADP + H(+). The enzyme catalyses L-threonyl-[protein] + ATP = O-phospho-L-threonyl-[protein] + ADP + H(+). Its function is as follows. Serine/threonine-protein kinase that may function as a signaling receptor of extracellular matrix component. The polypeptide is Wall-associated receptor kinase-like 17 (WAKL17) (Arabidopsis thaliana (Mouse-ear cress)).